The chain runs to 268 residues: TATA-box-binding protein (268 aa).

Residues 1–24 (MDSLTTHPATAQQARAFTSPSSLS) are compositionally biased toward polar residues. The segment at 1–86 (MDSLTTHPAT…TPAATPGASA (86 aa)) is disordered. Residues 50 to 86 (NGQSANGNVNGQQQGANAANGNGVMPATPAATPGASA) are compositionally biased toward low complexity. A run of 2 repeats spans residues 95-171 (LQNI…ARII) and 185-262 (IQNI…YPVL).

Belongs to the TBP family. Belongs to the TFIID complex together with the TBP-associated factors (TAFs). Binds DNA as monomer.

The protein localises to the nucleus. Its function is as follows. General transcription factor that functions at the core of the DNA-binding multiprotein factor TFIID. Binding of TFIID to the TATA box is the initial transcriptional step of the pre-initiation complex (PIC), playing a role in the activation of eukaryotic genes transcribed by RNA polymerase II. The sequence is that of TATA-box-binding protein (tbpA) from Emericella nidulans (strain FGSC A4 / ATCC 38163 / CBS 112.46 / NRRL 194 / M139) (Aspergillus nidulans).